The chain runs to 598 residues: Biotin-dependent acyl-coenzyme A carboxylase alpha3 subunit (598 aa).

In terms of domain architecture, Biotin carboxylation spans 8–452 (RIAKVLVANR…SFSVHTRWIE (445 aa)). One can recognise an ATP-grasp domain in the interval 127-324 (RHIAARAQAP…LVLQQFKIAN (198 aa)). Residue 155 to 216 (AKEHGVPIAI…ERYLDKPRHV (62 aa)) coordinates ATP. Mg(2+)-binding residues include E282, E295, and N297. The Mn(2+) site is built by E282, E295, and N297. The segment at 506 to 531 (PAGVIRKKPKPRKRGGHTGAATSGDA) is disordered. The span at 510 to 521 (IRKKPKPRKRGG) shows a compositional bias: basic residues. The region spanning 522–598 (HTGAATSGDA…TQGTVLAEIK (77 aa)) is the Biotinyl-binding domain. An N6-biotinyllysine modification is found at K564.

In terms of assembly, the biotin-dependent acyl-CoA carboxylase complex is composed of AccA3, which contains the biotin carboxylase (BC) and biotin carboxyl carrier protein (BCCP) domains, and an AccD protein, which contains the carboxyl transferase (CT) domain. The cofactor is Mg(2+). It depends on Mn(2+) as a cofactor. Biotin serves as cofactor.

It carries out the reaction N(6)-biotinyl-L-lysyl-[protein] + hydrogencarbonate + ATP = N(6)-carboxybiotinyl-L-lysyl-[protein] + ADP + phosphate + H(+). The protein operates within lipid metabolism; fatty acid biosynthesis. Its pathway is lipid metabolism; mycolic acid biosynthesis. Component of a biotin-dependent acyl-CoA carboxylase complex. This subunit catalyzes the ATP-dependent carboxylation of the biotin carried by the biotin carboxyl carrier (BCC) domain, resulting in the formation of carboxyl biotin. This Mycobacterium leprae (strain TN) protein is Biotin-dependent acyl-coenzyme A carboxylase alpha3 subunit (bccA).